A 279-amino-acid chain; its full sequence is MKVISSIQELRDQLRGQNRTAFVPTMGNLHEGHLSLMRLARQHGDPVVASIFVNRLQFGPNEDFDKYPRTLQDDIEKLQQNNVYVLFAPTERDMYPEPQEYRVLPPDDLGGILEGEFRPGFFAGVCTVVTKLMSCVQPRVAVFGKKDYQQLMIVRRMCQQLALPVEIIAAETVRDEDGLALSSRNRYLTTDERKEAPELAKTLQRVRDSVLGGERDLGKLEQQAHTHLAERGWVPDYIAIRRRANLIAPSAAELEAGEPLVVLAAAKLGATRLIDNLEI.

An ATP-binding site is contributed by 26-33 (MGNLHEGH). His33 serves as the catalytic Proton donor. Gln57 contributes to the (R)-pantoate binding site. Gln57 lines the beta-alanine pocket. Residue 144-147 (GKKD) participates in ATP binding. (R)-pantoate is bound at residue Gln150. ATP is bound by residues Val173 and 181 to 184 (LSSR).

Belongs to the pantothenate synthetase family. As to quaternary structure, homodimer.

The protein localises to the cytoplasm. The catalysed reaction is (R)-pantoate + beta-alanine + ATP = (R)-pantothenate + AMP + diphosphate + H(+). The protein operates within cofactor biosynthesis; (R)-pantothenate biosynthesis; (R)-pantothenate from (R)-pantoate and beta-alanine: step 1/1. In terms of biological role, catalyzes the condensation of pantoate with beta-alanine in an ATP-dependent reaction via a pantoyl-adenylate intermediate. In Burkholderia orbicola (strain MC0-3), this protein is Pantothenate synthetase.